A 167-amino-acid polypeptide reads, in one-letter code: Lipoprotein signal peptidase (167 aa).

4 helical membrane-spanning segments follow: residues 8-28 (TFLTLLLLASIDWVSKLVVLL), 46-66 (WGHFSFLIIPSFNEGAAFGLF), 68-88 (QYKIPLLIFRVCVILGLALFL), and 101-121 (IALTLILAGALGNVGDILLHG). Catalysis depends on residues Asp125 and Asp143. A helical membrane pass occupies residues 139–159 (FNLADAFISIGTLLLIGHLYF).

The protein belongs to the peptidase A8 family.

The protein localises to the cell inner membrane. The enzyme catalyses Release of signal peptides from bacterial membrane prolipoproteins. Hydrolyzes -Xaa-Yaa-Zaa-|-(S,diacylglyceryl)Cys-, in which Xaa is hydrophobic (preferably Leu), and Yaa (Ala or Ser) and Zaa (Gly or Ala) have small, neutral side chains.. The protein operates within protein modification; lipoprotein biosynthesis (signal peptide cleavage). Its function is as follows. This protein specifically catalyzes the removal of signal peptides from prolipoproteins. The chain is Lipoprotein signal peptidase from Chlamydia trachomatis serovar L2 (strain ATCC VR-902B / DSM 19102 / 434/Bu).